A 242-amino-acid chain; its full sequence is Myogenic factor 6 (242 aa).

The segment at 31-63 (SPLYPGSDGTLSPCQDQMPPEAGSDSSGEEHVL) is disordered. One can recognise a bHLH domain in the interval 93–144 (DRRKAATLRERRRLKKINEAFEALKRRTVANPNQRLPKVEILRSAINYIERL).

As to quaternary structure, efficient DNA binding requires dimerization with another bHLH protein.

Its subcellular location is the nucleus. Involved in muscle differentiation (myogenic factor). Induces fibroblasts to differentiate into myoblasts. Probable sequence specific DNA-binding protein. The sequence is that of Myogenic factor 6 (MYF6) from Sus scrofa (Pig).